Here is a 201-residue protein sequence, read N- to C-terminus: Ribosome maturation factor RimP (201 aa).

It belongs to the RimP family.

The protein localises to the cytoplasm. In terms of biological role, required for maturation of 30S ribosomal subunits. The chain is Ribosome maturation factor RimP from Rhizobium leguminosarum bv. trifolii (strain WSM2304).